Here is a 128-residue protein sequence, read N- to C-terminus: MKKTGIFNSEISRVIAKLGHKDKIAIVDLGFPIPSHVERIDIVLDFGRPTFEEVLKVILKELEVEQVILAHESSKKFEQIIKENIPRVEFLKISHEELKKLTNDVVAVIRTGDVVPYSNAILVSGVIF.

His-20 serves as the catalytic Proton donor. Substrate is bound by residues Asp-28, His-95, and 117–119 (YSN).

It belongs to the RbsD / FucU family. RbsD subfamily. Homodecamer.

It localises to the cytoplasm. The enzyme catalyses beta-D-ribopyranose = beta-D-ribofuranose. Its pathway is carbohydrate metabolism; D-ribose degradation; D-ribose 5-phosphate from beta-D-ribopyranose: step 1/2. In terms of biological role, catalyzes the interconversion of beta-pyran and beta-furan forms of D-ribose. The chain is D-ribose pyranase from Thermosipho africanus (strain TCF52B).